Here is a 243-residue protein sequence, read N- to C-terminus: UTP--glucose-1-phosphate uridylyltransferase AglF (243 aa).

This sequence belongs to the UDPGP type 2 family.

It carries out the reaction alpha-D-glucose 1-phosphate + UTP + H(+) = UDP-alpha-D-glucose + diphosphate. The protein operates within cell surface structure biogenesis; S-layer biogenesis. In terms of biological role, involved in the assembly of a N-linked pentasaccharide that decorates the S-layer glycoprotein and flagellins. Involved in the biosynthesis of the hexuronic acid found at position 3 of the pentasaccharide. This Haloferax volcanii (strain ATCC 29605 / DSM 3757 / JCM 8879 / NBRC 14742 / NCIMB 2012 / VKM B-1768 / DS2) (Halobacterium volcanii) protein is UTP--glucose-1-phosphate uridylyltransferase AglF (aglF).